Consider the following 297-residue polypeptide: ATP phosphoribosyltransferase (297 aa).

An N-acetylmethionine modification is found at methionine 1.

The protein belongs to the ATP phosphoribosyltransferase family.

The protein resides in the cytoplasm. It carries out the reaction 1-(5-phospho-beta-D-ribosyl)-ATP + diphosphate = 5-phospho-alpha-D-ribose 1-diphosphate + ATP. Its pathway is amino-acid biosynthesis; L-histidine biosynthesis; L-histidine from 5-phospho-alpha-D-ribose 1-diphosphate: step 1/9. Functionally, catalyzes the condensation of ATP and 5-phosphoribose 1-diphosphate to form N'-(5'-phosphoribosyl)-ATP (PR-ATP). Has a crucial role in the pathway because the rate of histidine biosynthesis seems to be controlled primarily by regulation of the enzymatic activity. This Saccharomyces cerevisiae (strain ATCC 204508 / S288c) (Baker's yeast) protein is ATP phosphoribosyltransferase (HIS1).